The primary structure comprises 294 residues: Single-stranded nucleic acid-binding protein (294 aa).

Positions 1-30 (MSAEIEEATNAVNNLSINDSEQQPRAPTHK) are disordered. Serine 2 carries the post-translational modification N-acetylserine. A phosphoserine mark is found at serine 2 and serine 16. Over residues 10-25 (NAVNNLSINDSEQQPR) the composition is skewed to polar residues. One can recognise an RRM 1 domain in the interval 37–119 (DTIFIGNVAH…REIHIKRART (83 aa)). A Phosphothreonine modification is found at threonine 49. At serine 66 the chain carries Phosphoserine. Phosphothreonine is present on residues threonine 91 and threonine 119. Position 125 is an omega-N-methylarginine (arginine 125). The interval 131–151 (RGGFRGRGGFRGGFRGGYRGG) is RNA-binding RGG-box. A dimethylated arginine mark is found at arginine 135, arginine 137, and arginine 141. Arginine 145 carries the post-translational modification Dimethylated arginine; alternate. Arginine 145 carries the post-translational modification Omega-N-methylarginine; alternate. The residue at position 149 (arginine 149) is an Omega-N-methylarginine. The span at 151–169 (GFRGRGNFRGRGGARGGFN) shows a compositional bias: gly residues. Residues 151-171 (GFRGRGNFRGRGGARGGFNGQ) form a disordered region. Residues arginine 153, arginine 155, and arginine 159 each carry the dimethylated arginine modification. 2 positions are modified to dimethylated arginine; alternate: arginine 161 and arginine 165. Omega-N-methylarginine; alternate occurs at positions 161 and 165. One can recognise an RRM 2 domain in the interval 186-274 (DTLYINNVPF…RELTVDVAVI (89 aa)). Threonine 242 carries the phosphothreonine modification. Phosphoserine is present on serine 244. The interval 275-294 (RPENDEEEIEQETGSEEKQE) is disordered. Over residues 278 to 288 (NDEEEIEQETG) the composition is skewed to acidic residues. Threonine 287 bears the Phosphothreonine mark. Serine 289 carries the phosphoserine modification.

The protein belongs to the RRM GAR family. As to quaternary structure, associated with snR10 and snR11 small nuclear RNAs.

The protein localises to the cytoplasm. It localises to the nucleus. It is found in the nucleolus. Its subcellular location is the P-body. The protein resides in the stress granule. In terms of biological role, functions in the transition of mRNAs from translation to an mRNP complex destined for decapping. High-copy-number suppressor of decapping defects. Overexpression suppresses decapping defects in both DCP1-2 and DCP2-7 mutations. Acts to promote translational repression of mRNA in conjunction with DHH1 and subsequent mRNA localization to P bodies. Promotes translational repression of mRNA during glucose deprivation. This Saccharomyces cerevisiae (strain ATCC 204508 / S288c) (Baker's yeast) protein is Single-stranded nucleic acid-binding protein (SBP1).